The following is a 231-amino-acid chain: Ribonuclease P protein component 3 (231 aa).

The protein belongs to the eukaryotic/archaeal RNase P protein component 3 family. Consists of a catalytic RNA component and at least 4-5 protein subunits.

The protein localises to the cytoplasm. It catalyses the reaction Endonucleolytic cleavage of RNA, removing 5'-extranucleotides from tRNA precursor.. Part of ribonuclease P, a protein complex that generates mature tRNA molecules by cleaving their 5'-ends. The protein is Ribonuclease P protein component 3 of Methanococcus maripaludis (strain C5 / ATCC BAA-1333).